Consider the following 130-residue polypeptide: Small ribosomal subunit protein uS11 (130 aa).

Belongs to the universal ribosomal protein uS11 family. As to quaternary structure, part of the 30S ribosomal subunit. Interacts with proteins S7 and S18. Binds to IF-3.

In terms of biological role, located on the platform of the 30S subunit, it bridges several disparate RNA helices of the 16S rRNA. Forms part of the Shine-Dalgarno cleft in the 70S ribosome. The chain is Small ribosomal subunit protein uS11 from Gluconacetobacter diazotrophicus (strain ATCC 49037 / DSM 5601 / CCUG 37298 / CIP 103539 / LMG 7603 / PAl5).